Here is a 181-residue protein sequence, read N- to C-terminus: MPLKELIDRDWQELESEGVLFSSLEKLVAWGRSNSLWPATFGLACCAIEMMSSTNARNDMSRFGSEVFRASPRQADVMIVAGRLSKKMAPVMRRVYDQMPDPKWVISMGACASSGGMFNNYAVVQNVDSVVPVDIFVPGCPPRPEALIYAVMQLQKKVRGEAFDQLGQQLPMVDAWTRELR.

C45, C46, C111, and C140 together coordinate [4Fe-4S] cluster.

It belongs to the complex I 20 kDa subunit family. NDH-1 is composed of 15 different subunits. Subunits NuoB, C, D, E, F, and G constitute the peripheral sector of the complex. [4Fe-4S] cluster is required as a cofactor.

Its subcellular location is the cell membrane. It carries out the reaction a quinone + NADH + 5 H(+)(in) = a quinol + NAD(+) + 4 H(+)(out). Its function is as follows. NDH-1 shuttles electrons from NADH, via FMN and iron-sulfur (Fe-S) centers, to quinones in the respiratory chain. The immediate electron acceptor for the enzyme in this species is believed to be a menaquinone. Couples the redox reaction to proton translocation (for every two electrons transferred, four hydrogen ions are translocated across the cytoplasmic membrane), and thus conserves the redox energy in a proton gradient. The sequence is that of NADH-quinone oxidoreductase subunit B from Deinococcus radiodurans (strain ATCC 13939 / DSM 20539 / JCM 16871 / CCUG 27074 / LMG 4051 / NBRC 15346 / NCIMB 9279 / VKM B-1422 / R1).